We begin with the raw amino-acid sequence, 185 residues long: Ribosome-recycling factor (185 aa).

Residues 141 to 161 (KQEKDKKISEDDLKRAEKEVQ) are disordered.

It belongs to the RRF family.

The protein resides in the cytoplasm. In terms of biological role, responsible for the release of ribosomes from messenger RNA at the termination of protein biosynthesis. May increase the efficiency of translation by recycling ribosomes from one round of translation to another. The sequence is that of Ribosome-recycling factor from Geotalea uraniireducens (strain Rf4) (Geobacter uraniireducens).